We begin with the raw amino-acid sequence, 935 residues long: Protein translocase subunit SecA (935 aa).

Residues Q86, 104 to 108 (GEGKT), and D494 each bind ATP. Positions 879 to 935 (EQAATARAQQHSSAAVAAPEQGATQRGAFGQRVSAADDAAPANRAERRAQKKPTKRH) are disordered.

The protein belongs to the SecA family. Monomer and homodimer. Part of the essential Sec protein translocation apparatus which comprises SecA, SecYEG and auxiliary proteins SecDF. Other proteins may also be involved.

The protein resides in the cell membrane. The protein localises to the cytoplasm. It carries out the reaction ATP + H2O + cellular proteinSide 1 = ADP + phosphate + cellular proteinSide 2.. Its function is as follows. Part of the Sec protein translocase complex. Interacts with the SecYEG preprotein conducting channel. Has a central role in coupling the hydrolysis of ATP to the transfer of proteins into and across the cell membrane, serving as an ATP-driven molecular motor driving the stepwise translocation of polypeptide chains across the membrane. This is Protein translocase subunit SecA from Leifsonia xyli subsp. xyli (strain CTCB07).